A 237-amino-acid polypeptide reads, in one-letter code: Fluoroquinolones export permease protein MT2761 (237 aa).

Transmembrane regions (helical) follow at residues 20–40, 49–69, 96–116, 119–139, 147–167, and 199–219; these read FLHA…PMPV, YVLV…TVFF, VLLA…HGLG, LLPL…VGFS, VTDW…PPVV, and LAPW…AGLC.

As to quaternary structure, the complex is composed of 2 ATP-binding proteins and 2 transmembrane proteins.

It localises to the cell membrane. In terms of biological role, part of the ABC transporter complex involved in fluoroquinolones export. Probably responsible for the translocation of the substrate across the membrane. This Mycobacterium tuberculosis (strain CDC 1551 / Oshkosh) protein is Fluoroquinolones export permease protein MT2761.